The sequence spans 111 residues: Large ribosomal subunit protein uL24 (111 aa).

Residues 43–62 (TRHKKKDQTTKRAAKQSTGK) are disordered.

Belongs to the universal ribosomal protein uL24 family. In terms of assembly, part of the 50S ribosomal subunit.

One of two assembly initiator proteins, it binds directly to the 5'-end of the 23S rRNA, where it nucleates assembly of the 50S subunit. Its function is as follows. One of the proteins that surrounds the polypeptide exit tunnel on the outside of the subunit. This Mycoplasma pneumoniae (strain ATCC 29342 / M129 / Subtype 1) (Mycoplasmoides pneumoniae) protein is Large ribosomal subunit protein uL24.